The primary structure comprises 230 residues: 7-cyano-7-deazaguanine synthase (230 aa).

16-26 lines the ATP pocket; sequence LSGGLDSMVSG. Positions 195, 205, 208, and 211 each coordinate Zn(2+).

The protein belongs to the QueC family. Zn(2+) serves as cofactor.

It carries out the reaction 7-carboxy-7-deazaguanine + NH4(+) + ATP = 7-cyano-7-deazaguanine + ADP + phosphate + H2O + H(+). It participates in purine metabolism; 7-cyano-7-deazaguanine biosynthesis. Functionally, catalyzes the ATP-dependent conversion of 7-carboxy-7-deazaguanine (CDG) to 7-cyano-7-deazaguanine (preQ(0)). The chain is 7-cyano-7-deazaguanine synthase from Rhizorhabdus wittichii (strain DSM 6014 / CCUG 31198 / JCM 15750 / NBRC 105917 / EY 4224 / RW1) (Sphingomonas wittichii).